Here is a 1072-residue protein sequence, read N- to C-terminus: Rho family-interacting cell polarization regulator 2 (1072 aa).

Residues Asn-83–Leu-112 adopt a coiled-coil conformation. The segment at Arg-173–Arg-470 is necessary for interaction with NCAM and myoblast protrusion formation. 2 disordered regions span residues Asp-439–Thr-465 and Glu-683–Pro-718. Residues Ala-447–Ile-460 are compositionally biased toward polar residues. Positions Glu-683–Gly-698 are enriched in basic and acidic residues.

It belongs to the RIPOR family. Homooligomer; homooligomerization is regulated by RHOC and leads to the formation of concatemers through the association of N- and C-termini. Interacts with NCAM; this interaction is necessary for myoblast protrusion formation. In terms of tissue distribution, expressed in myoblast and myotubes (at protein level). Expressed in brain, eyes and skeletal muscle.

Its subcellular location is the cytoplasm. It is found in the cytoskeleton. The protein resides in the cell projection. The protein localises to the filopodium. It localises to the apical cell membrane. Its subcellular location is the stereocilium. It is found in the stereocilium membrane. In terms of biological role, acts as an inhibitor of the small GTPase RHOA and plays several roles in the regulation of myoblast and hair cell differentiation, lymphocyte T proliferation and neutrophil polarization. Plays a role in fetal mononuclear myoblast differentiation by promoting filopodia and myotube formation. Maintains naive T lymphocytes in a quiescent state and prevents chemokine-induced T lymphocyte responses, such as cell adhesion, polarization and migration. Involved also in the regulation of neutrophil polarization, chemotaxis and adhesion. Required for normal development of inner and outer hair cell stereocilia within the cochlea of the inner ear. Plays a role for maintaining the structural organization of the basal domain of stereocilia. Involved in mechanosensory hair cell function. Required for normal hearing. The sequence is that of Rho family-interacting cell polarization regulator 2 from Coturnix japonica (Japanese quail).